Reading from the N-terminus, the 269-residue chain is Ribonuclease HII (269 aa).

The RNase H type-2 domain maps to R28 to R222. D34, E35, and D128 together coordinate a divalent metal cation.

This sequence belongs to the RNase HII family. Requires Mn(2+) as cofactor. It depends on Mg(2+) as a cofactor.

It localises to the cytoplasm. The enzyme catalyses Endonucleolytic cleavage to 5'-phosphomonoester.. Functionally, endonuclease that specifically degrades the RNA of RNA-DNA hybrids. This chain is Ribonuclease HII, found in Salinispora arenicola (strain CNS-205).